Reading from the N-terminus, the 876-residue chain is Alanine--tRNA ligase (876 aa).

4 residues coordinate Zn(2+): histidine 565, histidine 569, cysteine 667, and histidine 671.

Belongs to the class-II aminoacyl-tRNA synthetase family. It depends on Zn(2+) as a cofactor.

It localises to the cytoplasm. It carries out the reaction tRNA(Ala) + L-alanine + ATP = L-alanyl-tRNA(Ala) + AMP + diphosphate. Functionally, catalyzes the attachment of alanine to tRNA(Ala) in a two-step reaction: alanine is first activated by ATP to form Ala-AMP and then transferred to the acceptor end of tRNA(Ala). Also edits incorrectly charged Ser-tRNA(Ala) and Gly-tRNA(Ala) via its editing domain. The chain is Alanine--tRNA ligase from Desulfosudis oleivorans (strain DSM 6200 / JCM 39069 / Hxd3) (Desulfococcus oleovorans).